Reading from the N-terminus, the 396-residue chain is Elongation factor Tu (396 aa).

Residues 10–206 (KPHVNVGTIG…ALDSYIPTPE (197 aa)) enclose the tr-type G domain. A G1 region spans residues 19–26 (GHVDHGKT). 19–26 (GHVDHGKT) contributes to the GTP binding site. A Mg(2+)-binding site is contributed by T26. The segment at 60-64 (GITIN) is G2. Residues 81–84 (DCPG) form a G3 region. Residues 81-85 (DCPGH) and 136-139 (NKCD) contribute to the GTP site. The segment at 136-139 (NKCD) is G4. The interval 174–176 (SAL) is G5.

Belongs to the TRAFAC class translation factor GTPase superfamily. Classic translation factor GTPase family. EF-Tu/EF-1A subfamily. Monomer.

Its subcellular location is the cytoplasm. The enzyme catalyses GTP + H2O = GDP + phosphate + H(+). GTP hydrolase that promotes the GTP-dependent binding of aminoacyl-tRNA to the A-site of ribosomes during protein biosynthesis. The protein is Elongation factor Tu of Aromatoleum aromaticum (strain DSM 19018 / LMG 30748 / EbN1) (Azoarcus sp. (strain EbN1)).